Here is a 305-residue protein sequence, read N- to C-terminus: MQQPHIPVMLNEMLKFLAPKAGESYLDCTFGAGGYSKALLENCDCYVTALDRDPNVIKKAEEIKHNYKDRFDFVETNFGNCFAKLESKKFDGIVLDLGVSSMQLDIPDRGFSFLHDGPLDMRMSGQGLSAEEFINTAEEKDLADVIYKYGDETFSRRIAKKIVEVRKAARIDSTGKLADIVRSCIGFRKGKIDPATKTFQAIRIYINNELGELEQFLANVKNILKKDGRLVVVSFHSLEDRIVKNFFKENSEKPVARSKYAKEDIMLNPDKWLKIITNKAEIPSDKEISLNVRARSAKLRAAKKI.

Residues 33 to 35, Asp51, Phe78, Asp96, and Gln103 each bind S-adenosyl-L-methionine; that span reads GGY.

This sequence belongs to the methyltransferase superfamily. RsmH family.

It is found in the cytoplasm. It carries out the reaction cytidine(1402) in 16S rRNA + S-adenosyl-L-methionine = N(4)-methylcytidine(1402) in 16S rRNA + S-adenosyl-L-homocysteine + H(+). Its function is as follows. Specifically methylates the N4 position of cytidine in position 1402 (C1402) of 16S rRNA. The sequence is that of Ribosomal RNA small subunit methyltransferase H from Rickettsia bellii (strain RML369-C).